We begin with the raw amino-acid sequence, 152 residues long: Putative pseudoazurin (152 aa).

A signal peptide spans 1 to 23 (MPLKFGLIVATAALIASAASLMA). A Plastocyanin-like domain is found at 28–116 (VQMLNKGTDG…MGMVALIQVG (89 aa)). His-63, Cys-101, His-104, and Met-109 together coordinate Cu cation.

Requires Cu cation as cofactor.

It is found in the periplasm. Its function is as follows. This soluble electron transfer copper protein is required for the inactivation of copper-containing nitrite reductase in the presence of oxygen. The chain is Putative pseudoazurin (azu) from Rhizobium leguminosarum bv. viciae.